An 858-amino-acid chain; its full sequence is KN motif and ankyrin repeat domain-containing protein 2 (858 aa).

Residues 1-29 (MAQVLHVSAPFPGTPGPASPPAFPSKEPD) form a disordered region. The interval 1–72 (MAQVLHVSAP…AVQRRPRLGS (72 aa)) is interaction with AIFM1. Positions 12-23 (PGTPGPASPPAF) are enriched in pro residues. Residues S19, S83, S86, S89, and S92 each carry the phosphoserine modification. R105 bears the Omega-N-methylarginine mark. A disordered region spans residues 140-182 (AAPAGLGSLTPSAAGSTSSLVGVGLPPPTPRGSGLSTPVPPSA). Positions 148-159 (LTPSAAGSTSSL) are enriched in polar residues. T168 is subject to Phosphothreonine. 2 coiled-coil regions span residues 183 to 234 (GHLA…KSQK) and 282 to 313 (EAAL…QADL). S323 bears the Phosphoserine mark. Residue T329 is modified to Phosphothreonine. Phosphoserine occurs at positions 356 and 375. Disordered regions lie at residues 412–451 (CDGA…PAHD) and 488–590 (QKEE…SSAK). Over residues 421-435 (APAESSLSPPESEGA) the composition is skewed to low complexity. A compositionally biased stretch (polar residues) spans 436–446 (TQAQPEKNTGQ). Residues 488 to 499 (QKEEPTDPEAHR) show a composition bias toward basic and acidic residues. Low complexity predominate over residues 509–528 (GSISPRYESSSEDSSTAENF). S547 is subject to Phosphoserine. Residues 555–569 (RPKETAKAKTSREES) show a composition bias toward basic and acidic residues. T559 is modified (phosphothreonine). The ANK 0; degenerate repeat unit spans residues 621–658 (RELKVAYTTVLQEWLRLACRSDAHPELVRRHLVTFRAM). ANK repeat units lie at residues 673–703 (NGNT…QVDK), 707–740 (AGYS…DVNA), 745–774 (AGQT…DVNV), 778–808 (DGST…DISI), and 812–842 (DGST…KCSF). Residues 676-842 (TALHYSVSHA…YSRMNIKCSF (167 aa)) form an interaction with NCOA1 region.

As to quaternary structure, interacts (non-phosphorylated form) with NCOA1; NCOA2 AND NCOA3. Interacts with AIFM1. Interacts with ARHGDIA; the interaction is direct and may regulate the interaction of ARHGDIA with RHOA, RAC1 and CDC42. Interacts (via ANK repeats 1-5) with KIF21A. Phosphorylated by casein kinase II upon estrogen stimulation. Phosphorylation induces the release by KANK2 of NCOA1 and its translocation to the nucleus where NCOA1 can activate gene transcription.

Its subcellular location is the cytoplasm. The protein localises to the mitochondrion. In terms of biological role, involved in transcription regulation by sequestering in the cytoplasm nuclear receptor coactivators such as NCOA1, NCOA2 and NCOA3. Involved in regulation of caspase-independent apoptosis by sequestering the proapoptotic factor AIFM1 in mitochondria. Pro-apoptotic stimuli can induce its proteasomal degradation allowing the translocation of AIFM1 to the nucleus to induce apoptosis. Involved in the negative control of vitamin D receptor signaling pathway. Involved in actin stress fibers formation through its interaction with ARHGDIA and the regulation of the Rho signaling pathway. May thereby play a role in cell adhesion and migration, regulating for instance podocytes migration during development of the kidney. Through the Rho signaling pathway may also regulate cell proliferation. This Bos taurus (Bovine) protein is KN motif and ankyrin repeat domain-containing protein 2 (KANK2).